We begin with the raw amino-acid sequence, 197 residues long: GTP cyclohydrolase-2 (197 aa).

50–54 (RIHSE) contacts GTP. Cys-55, Cys-66, and Cys-68 together coordinate Zn(2+). GTP-binding positions include Gln-71, 93-95 (EGR), and Thr-115. The Proton acceptor role is filled by Asp-127. Catalysis depends on Arg-129, which acts as the Nucleophile. The GTP site is built by Thr-150 and Lys-155.

Belongs to the GTP cyclohydrolase II family. Zn(2+) is required as a cofactor.

It carries out the reaction GTP + 4 H2O = 2,5-diamino-6-hydroxy-4-(5-phosphoribosylamino)-pyrimidine + formate + 2 phosphate + 3 H(+). The protein operates within cofactor biosynthesis; riboflavin biosynthesis; 5-amino-6-(D-ribitylamino)uracil from GTP: step 1/4. Catalyzes the conversion of GTP to 2,5-diamino-6-ribosylamino-4(3H)-pyrimidinone 5'-phosphate (DARP), formate and pyrophosphate. This chain is GTP cyclohydrolase-2, found in Neisseria meningitidis serogroup C (strain 053442).